The following is a 63-amino-acid chain: Large ribosomal subunit protein bL35 (63 aa).

The protein belongs to the bacterial ribosomal protein bL35 family.

The protein is Large ribosomal subunit protein bL35 of Sulfurimonas denitrificans (strain ATCC 33889 / DSM 1251) (Thiomicrospira denitrificans (strain ATCC 33889 / DSM 1251)).